We begin with the raw amino-acid sequence, 757 residues long: Protein hunchback (757 aa).

Disordered stretches follow at residues 30–51 and 171–213; these read EPGH…PIPS and EKLQ…EDMK. Residues 39–51 are compositionally biased toward polar residues; sequence SVASSPRQSPIPS. Over residues 197-213 the composition is skewed to basic and acidic residues; the sequence is EPEKEHDQMSNSSEDMK. 4 consecutive C2H2-type zinc fingers follow at residues 239-261, 268-290, 296-318, and 324-348; these read YKCK…TRTH, LQCP…IRKH, FQCD…RKSH, and YRCA…KYGH. 3 disordered regions span residues 367 to 416, 511 to 535, and 602 to 694; these read DVYG…VATS, EQLQ…YERK, and MTSP…APPS. Low complexity-rich tracts occupy residues 397–414 and 512–521; these read VAAV…QPVA and QLQQQNQQQS. Residues 522–531 show a composition bias toward acidic residues; the sequence is DNEEEDQDDE. Positions 651-694 are enriched in low complexity; the sequence is ANTSASSTASSSGNSSNASSNSNGNSSSNSSSNGTTSAVAAPPS. C2H2-type zinc fingers lie at residues 704 to 726 and 732 to 756; these read YECK…MGYH and FKCN…RNAH.

Belongs to the hunchback C2H2-type zinc-finger protein family.

The protein localises to the nucleus. Its function is as follows. Gap class segmentation protein that controls development of head structures. The protein is Protein hunchback (hb) of Drosophila sechellia (Fruit fly).